Consider the following 452-residue polypeptide: Tryptophan biosynthesis protein TrpCF (452 aa).

An indole-3-glycerol phosphate synthase region spans residues 1-253; sequence MPSVLENILK…KACIKLILGE (253 aa). An N-(5'-phosphoribosyl)anthranilate isomerase region spans residues 254–448; that stretch reads NKVCGLTRIK…KDKIKRLARI (195 aa).

It in the N-terminal section; belongs to the TrpC family. In the C-terminal section; belongs to the TrpF family.

The catalysed reaction is N-(5-phospho-beta-D-ribosyl)anthranilate = 1-(2-carboxyphenylamino)-1-deoxy-D-ribulose 5-phosphate. The enzyme catalyses 1-(2-carboxyphenylamino)-1-deoxy-D-ribulose 5-phosphate + H(+) = (1S,2R)-1-C-(indol-3-yl)glycerol 3-phosphate + CO2 + H2O. Its pathway is amino-acid biosynthesis; L-tryptophan biosynthesis; L-tryptophan from chorismate: step 3/5. It functions in the pathway amino-acid biosynthesis; L-tryptophan biosynthesis; L-tryptophan from chorismate: step 4/5. In terms of biological role, bifunctional enzyme that catalyzes two sequential steps of tryptophan biosynthetic pathway. The first reaction is catalyzed by the isomerase, coded by the TrpF domain; the second reaction is catalyzed by the synthase, coded by the TrpC domain. The sequence is that of Tryptophan biosynthesis protein TrpCF (trpC) from Helicobacter pylori (strain ATCC 700392 / 26695) (Campylobacter pylori).